Consider the following 621-residue polypeptide: UvrABC system protein C (621 aa).

Positions 11-90 (TTPGVYLYKD…IKKHRPRYNI (80 aa)) constitute a GIY-YIG domain. Residues 200-235 (KELVELLQKDMLYASEALEFEKAATLRDQIQAIKHT) enclose the UVR domain.

This sequence belongs to the UvrC family. As to quaternary structure, interacts with UvrB in an incision complex.

It is found in the cytoplasm. In terms of biological role, the UvrABC repair system catalyzes the recognition and processing of DNA lesions. UvrC both incises the 5' and 3' sides of the lesion. The N-terminal half is responsible for the 3' incision and the C-terminal half is responsible for the 5' incision. In Lawsonia intracellularis (strain PHE/MN1-00), this protein is UvrABC system protein C.